A 173-amino-acid polypeptide reads, in one-letter code: MTYFVLFLGLCFVLGGLAVASNPSPYYGVVGLVLASIAGCGWLLSLGVSFVSLVLFMVYLGGMLVVFVYSVSLAADPFPEAWGDWRVVGYGVSLITVLVVGVVVGGFVEYWDFGVITVDSVGMFSVRLDFGGVAMFYSCGVGMFLVAGWGLLLTLFVVLELVRGLTRGAIRAV.

Helical transmembrane passes span methionine 1–serine 21, tyrosine 27–glycine 47, valine 48–valine 68, valine 87–phenylalanine 107, phenylalanine 113–valine 133, and cysteine 139–leucine 159.

This sequence belongs to the complex I subunit 6 family.

It is found in the mitochondrion membrane. The catalysed reaction is a ubiquinone + NADH + 5 H(+)(in) = a ubiquinol + NAD(+) + 4 H(+)(out). Functionally, core subunit of the mitochondrial membrane respiratory chain NADH dehydrogenase (Complex I) that is believed to belong to the minimal assembly required for catalysis. Complex I functions in the transfer of electrons from NADH to the respiratory chain. The immediate electron acceptor for the enzyme is believed to be ubiquinone. The polypeptide is NADH-ubiquinone oxidoreductase chain 6 (MT-ND6) (Alle alle (Dovekie)).